Consider the following 1167-residue polypeptide: DNA-directed RNA polymerase subunit beta (1167 aa).

A disordered region spans residues 1 to 27; the sequence is MAVSPANQATAATTSAESRSEATGIPG. A compositionally biased stretch (low complexity) spans 9–23; that stretch reads ATAATTSAESRSEAT.

This sequence belongs to the RNA polymerase beta chain family. In terms of assembly, the RNAP catalytic core consists of 2 alpha, 1 beta, 1 beta' and 1 omega subunit. When a sigma factor is associated with the core the holoenzyme is formed, which can initiate transcription.

It catalyses the reaction RNA(n) + a ribonucleoside 5'-triphosphate = RNA(n+1) + diphosphate. Functionally, DNA-dependent RNA polymerase catalyzes the transcription of DNA into RNA using the four ribonucleoside triphosphates as substrates. This chain is DNA-directed RNA polymerase subunit beta, found in Amycolatopsis mediterranei (strain S699) (Nocardia mediterranei).